The following is a 309-amino-acid chain: Dermonecrotic toxin LarSicTox-alphaIB2bi (309 aa).

Residue V1 is a signal peptide. Positions 2–27 (RATEKFAPIYFFCHPLQSAETDVAER) are excised as a propeptide. Residue H38 is part of the active site. Positions 58 and 60 each coordinate Mg(2+). H74 serves as the catalytic Nucleophile. Intrachain disulfides connect C78/C84 and C80/C223. Mg(2+) is bound at residue D118. An N-linked (GlcNAc...) asparagine glycan is attached at N286.

Belongs to the arthropod phospholipase D family. Class II subfamily. Mg(2+) serves as cofactor. In terms of tissue distribution, expressed by the venom gland.

It is found in the secreted. The catalysed reaction is an N-(acyl)-sphingosylphosphocholine = an N-(acyl)-sphingosyl-1,3-cyclic phosphate + choline. The enzyme catalyses N-hexanoyl-sphing-4-enine-1-phosphocholine = N-(hexanoyl)-sphing-4-enine-1,3-cyclic phosphate + choline. It carries out the reaction N-(dodecanoyl)-sphing-4-enine-1-phosphocholine = N-dodecanoyl-sphing-4-enine-1,3-cyclic phosphate + choline. It catalyses the reaction a 1-acyl-sn-glycero-3-phosphocholine = a 1-acyl-sn-glycero-2,3-cyclic phosphate + choline. The catalysed reaction is 1-tetradecanoyl-sn-glycero-3-phosphocholine = 1-tetradecanoyl-sn-glycero-2,3-cyclic phosphate + choline. The enzyme catalyses 1-octanoyl-sn-glycero-3-phosphocholine = 1-octanoyl-sn-glycero-2,3-cyclic phosphate + choline. It carries out the reaction 1-hexadecanoyl-sn-glycero-3-phosphocholine = 1-hexadecanoyl-sn-glycero-2,3-cyclic phosphate + choline. It catalyses the reaction an N-(acyl)-sphingosylphosphoethanolamine = an N-(acyl)-sphingosyl-1,3-cyclic phosphate + ethanolamine. The catalysed reaction is N-dodecanoyl-heptadecasphing-4-enine-1-phosphoethanolamine = N-dodecanoyl-heptadecasphing-4-enine-1,3-cyclic phosphate + ethanolamine. In terms of biological role, dermonecrotic toxins cleave the phosphodiester linkage between the phosphate and headgroup of certain phospholipids (sphingolipid and lysolipid substrates), forming an alcohol (often choline) and a cyclic phosphate. This toxin acts on sphingomyelin (SM) with high activity and on lysophosphatidylcholine (LPC) and ceramide phosphoethanolamine (CPE) with low activity. In vivo, shows potent insecticidal activities. On mammals, induces dermonecrosis, hemolysis, increased vascular permeability, edema, inflammatory response, and platelet aggregation. This chain is Dermonecrotic toxin LarSicTox-alphaIB2bi, found in Loxosceles arizonica (Arizona brown spider).